Consider the following 184-residue polypeptide: UPF0301 protein Sden_2674 (184 aa).

The protein belongs to the UPF0301 (AlgH) family.

This chain is UPF0301 protein Sden_2674, found in Shewanella denitrificans (strain OS217 / ATCC BAA-1090 / DSM 15013).